Here is a 176-residue protein sequence, read N- to C-terminus: Large ribosomal subunit protein uL6 (176 aa).

It belongs to the universal ribosomal protein uL6 family. In terms of assembly, part of the 50S ribosomal subunit.

Its function is as follows. This protein binds to the 23S rRNA, and is important in its secondary structure. It is located near the subunit interface in the base of the L7/L12 stalk, and near the tRNA binding site of the peptidyltransferase center. The protein is Large ribosomal subunit protein uL6 of Lactobacillus acidophilus (strain ATCC 700396 / NCK56 / N2 / NCFM).